The sequence spans 149 residues: Small ribosomal subunit protein bS16 (149 aa).

The tract at residues 115–149 (KLKAAKSEADAKAKAEAEAAATEEAPAEEPAAEAE) is disordered. Residues 119 to 131 (AKSEADAKAKAEA) are compositionally biased toward basic and acidic residues. The segment covering 139 to 149 (APAEEPAAEAE) has biased composition (acidic residues).

Belongs to the bacterial ribosomal protein bS16 family.

The sequence is that of Small ribosomal subunit protein bS16 from Bifidobacterium adolescentis (strain ATCC 15703 / DSM 20083 / NCTC 11814 / E194a).